The following is a 381-amino-acid chain: L-lactate dehydrogenase (381 aa).

The 380-residue stretch at 1-380 folds into the FMN hydroxy acid dehydrogenase domain; sequence MIISASTDYR…TRDSLVRELG (380 aa). Tyr24 contacts substrate. 2 residues coordinate FMN: Ser106 and Gln127. Substrate is bound at residue Tyr129. Thr155 lines the FMN pocket. Arg164 lines the substrate pocket. Lys251 provides a ligand contact to FMN. Catalysis depends on His275, which acts as the Proton acceptor. Arg278 contributes to the substrate binding site. Residue 306 to 330 coordinates FMN; the sequence is DSGIRSGLDVVRMIALGADTVLIGR.

This sequence belongs to the FMN-dependent alpha-hydroxy acid dehydrogenase family. Homotetramer. FMN serves as cofactor.

It is found in the cell inner membrane. The catalysed reaction is (S)-lactate + A = pyruvate + AH2. Its function is as follows. Catalyzes the conversion of L-lactate to pyruvate. Is coupled to the respiratory chain. The protein is L-lactate dehydrogenase of Pseudomonas entomophila (strain L48).